Consider the following 497-residue polypeptide: Glycerol kinase (497 aa).

Thr13 serves as a coordination point for ADP. Residues Thr13, Thr14, and Ser15 each contribute to the ATP site. Residue Thr13 coordinates sn-glycerol 3-phosphate. Arg17 is an ADP binding site. Sn-glycerol 3-phosphate contacts are provided by Arg83, Glu84, and Tyr135. Glycerol-binding residues include Arg83, Glu84, and Tyr135. His231 is subject to Phosphohistidine; by HPr. Residue Asp245 participates in sn-glycerol 3-phosphate binding. Glycerol is bound by residues Asp245 and Gln246. ADP contacts are provided by Thr267 and Gly310. 4 residues coordinate ATP: Thr267, Gly310, Gln314, and Gly411. Residues Gly411 and Asn415 each coordinate ADP.

The protein belongs to the FGGY kinase family. In terms of assembly, homotetramer and homodimer (in equilibrium). Post-translationally, the phosphoenolpyruvate-dependent sugar phosphotransferase system (PTS), including enzyme I, and histidine-containing protein (HPr) are required for the phosphorylation, which leads to the activation of the enzyme.

It catalyses the reaction glycerol + ATP = sn-glycerol 3-phosphate + ADP + H(+). It functions in the pathway polyol metabolism; glycerol degradation via glycerol kinase pathway; sn-glycerol 3-phosphate from glycerol: step 1/1. With respect to regulation, activated by phosphorylation and inhibited by fructose 1,6-bisphosphate (FBP). In terms of biological role, key enzyme in the regulation of glycerol uptake and metabolism. Catalyzes the phosphorylation of glycerol to yield sn-glycerol 3-phosphate. The polypeptide is Glycerol kinase (Halalkalibacterium halodurans (strain ATCC BAA-125 / DSM 18197 / FERM 7344 / JCM 9153 / C-125) (Bacillus halodurans)).